Reading from the N-terminus, the 326-residue chain is Eukaryotic translation initiation factor 3 subunit I (326 aa).

WD repeat units follow at residues 8–47, 50–89, 145–184, 188–227, and 285–326; these read GHERSITQIKYNREGDLLFSSSKDQKPNVWYSLNGERLGT, GHQGAVWCLDVDWESRKLITGAGDMTTKLWDVEYGTVIAS, MVESKITSMQWGPLDETIITGHDNGNIAIWDVRKGQKVVD, DHAAGINDMQLSKDGTMFVTASKDNTAKLFDAESLMCLKT, and GHFG…NIFE.

The protein belongs to the eIF-3 subunit I family. As to quaternary structure, component of the eukaryotic translation initiation factor 3 (eIF-3) complex. The eIF-3 complex interacts with pix.

The protein localises to the cytoplasm. Its function is as follows. Component of the eukaryotic translation initiation factor 3 (eIF-3) complex, which is involved in protein synthesis of a specialized repertoire of mRNAs and, together with other initiation factors, stimulates binding of mRNA and methionyl-tRNAi to the 40S ribosome. The eIF-3 complex specifically targets and initiates translation of a subset of mRNAs involved in cell proliferation. The protein is Eukaryotic translation initiation factor 3 subunit I of Drosophila grimshawi (Hawaiian fruit fly).